The sequence spans 937 residues: Protocadherin alpha-7 (937 aa).

Residues Met1–Gly29 form the signal peptide. The Extracellular portion of the chain corresponds to Gln30 to Asn697. 6 consecutive Cadherin domains span residues Ser34 to Phe133, Ala157 to Phe242, Asp243 to Leu350, Thr351 to Phe455, Ala456 to Leu565, and Pro587 to Val682. An intrachain disulfide couples Cys96 to Cys102. O-linked (Man) threonine glycosylation is found at Thr223 and Thr225. Asn257 and Asn265 each carry an N-linked (GlcNAc...) asparagine glycan. A glycan (O-linked (Man) threonine) is linked at Thr438. An O-linked (Man) serine glycan is attached at Ser478. An N-linked (GlcNAc...) asparagine glycan is attached at Asn548. The chain crosses the membrane as a helical span at residues Val698 to Tyr718. Residues Thr719–Gln937 lie on the Cytoplasmic side of the membrane. 2 disordered regions span residues Arg755–Arg794 and Arg816–Pro843. PXXP repeat units follow at residues Pro774 to Pro777, Pro786 to Pro789, Pro819 to Pro822, Pro860 to Pro863, and Pro878 to Pro881. Residues Pro774–Pro881 form a 5 X 4 AA repeats of P-X-X-P region. Residues Ser775–Arg787 are compositionally biased toward polar residues. The disordered stretch occupies residues Arg887–Gln937. Basic and acidic residues predominate over residues Asp896–Lys910.

As to quaternary structure, forms homodimers in trans (molecules expressed by two different cells). Forms promiscuous heterodimers in cis (at the plasma membrane of the same cell) with other protocadherins.

It is found in the cell membrane. Its function is as follows. Calcium-dependent cell-adhesion protein involved in cells self-recognition and non-self discrimination. Thereby, it is involved in the establishment and maintenance of specific neuronal connections in the brain. This chain is Protocadherin alpha-7, found in Mus musculus (Mouse).